Reading from the N-terminus, the 51-residue chain is Large ribosomal subunit protein eL39 (51 aa).

It belongs to the eukaryotic ribosomal protein eL39 family. As to quaternary structure, interacts with YIH1.

The chain is Large ribosomal subunit protein eL39 (RPL39) from Kluyveromyces marxianus (Yeast).